Reading from the N-terminus, the 109-residue chain is Nucleoid-associated protein ECA1177 (109 aa).

Belongs to the YbaB/EbfC family. Homodimer.

The protein localises to the cytoplasm. Its subcellular location is the nucleoid. In terms of biological role, binds to DNA and alters its conformation. May be involved in regulation of gene expression, nucleoid organization and DNA protection. The chain is Nucleoid-associated protein ECA1177 from Pectobacterium atrosepticum (strain SCRI 1043 / ATCC BAA-672) (Erwinia carotovora subsp. atroseptica).